The chain runs to 918 residues: MKYDFDAIEKKWQKYWKENRTYQVNIDRNKPKYYVLDMFPYPSGVGLHVGHPLGYIASDIYARYKRLKGFNVLHPMGYDAYGLPAEQYAIQTGQHPSITTKENINRYRKQLDKIGFCFDWDREIRTCDPKYYQWTQWVFIQMFNSYYCKEAQRARPITELVKILENQGTGGLHLACTKEIHLTANEWQMKDEKSKQAILMNYRIAYLSDIVVNWCPALGTVLANDEISGGISIRGGYTVEQRKMRQWCLRISAYAKRLLEGLDKIEWTDSLKKMQRNWIGRSEGVELRFKIKDENIEFMIFTTRPETIFGVTFIVIAPESEWLTQTIISKKKDSVDSYLNLVKRRTERERISNRKVTGVFTGSYAVHPISGETIPIWISDYILADYGTGAVMAVPAHDSRDYAFAKHFDLPIIPLIEDIDISKESFDIKEGIMTNSDFLNGLSVKQAIQKVKEYIKDENLGKIKVNYRLRDAIFSRQRYWGEPFPIYYKNGIPYAVDEEDLPIKLPEIDKFLPAETGKPPLGRAKNWTYKGYPLELTTMPGFAGSSAYYLRYEDPHNSECLVSSEANEYWQNVDLYIGGIEHATGHLIYSRFWNKFLFDLGIVAKEEPFKKLINQGMIQGRSNFVYRIKNTNTFVSYGLKHQYDVTPIHVDINLVFDDVLNIESFRDWNSEYKNAEFILENGKYVCGWAIEKMSKSMFNTVSPDNIVNRFGADAFRLYEMFLGPLEQSKPWDTKGIDGIARFLKRLWNLFFENDVLKVSNSLPLDKELKSIHKLIKKVSWDIENFSFNTSVAAFMICINELTLLKCSKHSILSDLVIVLAPFAPHIAEELWHLLGNEATIFDSQFPKCNEEYLKEENVKYTVSFNGKARFILNFPKKISEENVKDTVLKCESSKKWLKNKIPKKIIIIPNKIVNIVFD.

The 'HIGH' region motif lies at Pro-40 to His-51. Positions Lys-692–Ser-696 match the 'KMSKS' region motif. Lys-695 serves as a coordination point for ATP.

It belongs to the class-I aminoacyl-tRNA synthetase family.

The protein resides in the cytoplasm. It carries out the reaction tRNA(Leu) + L-leucine + ATP = L-leucyl-tRNA(Leu) + AMP + diphosphate. This Azobacteroides pseudotrichonymphae genomovar. CFP2 protein is Leucine--tRNA ligase.